A 202-amino-acid chain; its full sequence is Putative 3-methyladenine DNA glycosylase (202 aa).

The protein belongs to the DNA glycosylase MPG family.

The sequence is that of Putative 3-methyladenine DNA glycosylase from Staphylococcus aureus (strain bovine RF122 / ET3-1).